A 235-amino-acid polypeptide reads, in one-letter code: 7-cyano-7-deazaguanine synthase (235 aa).

9–19 (FSGGQDSTTCL) is a binding site for ATP. Positions 197, 212, 215, and 218 each coordinate Zn(2+).

It belongs to the QueC family. The cofactor is Zn(2+).

The enzyme catalyses 7-carboxy-7-deazaguanine + NH4(+) + ATP = 7-cyano-7-deazaguanine + ADP + phosphate + H2O + H(+). It functions in the pathway purine metabolism; 7-cyano-7-deazaguanine biosynthesis. In terms of biological role, catalyzes the ATP-dependent conversion of 7-carboxy-7-deazaguanine (CDG) to 7-cyano-7-deazaguanine (preQ(0)). This Polaromonas sp. (strain JS666 / ATCC BAA-500) protein is 7-cyano-7-deazaguanine synthase.